The following is an 873-amino-acid chain: Alanine--tRNA ligase (873 aa).

His-563, His-567, Cys-664, and His-668 together coordinate Zn(2+).

The protein belongs to the class-II aminoacyl-tRNA synthetase family. It depends on Zn(2+) as a cofactor.

It is found in the cytoplasm. The catalysed reaction is tRNA(Ala) + L-alanine + ATP = L-alanyl-tRNA(Ala) + AMP + diphosphate. Functionally, catalyzes the attachment of alanine to tRNA(Ala) in a two-step reaction: alanine is first activated by ATP to form Ala-AMP and then transferred to the acceptor end of tRNA(Ala). Also edits incorrectly charged Ser-tRNA(Ala) and Gly-tRNA(Ala) via its editing domain. This chain is Alanine--tRNA ligase, found in Aromatoleum aromaticum (strain DSM 19018 / LMG 30748 / EbN1) (Azoarcus sp. (strain EbN1)).